Reading from the N-terminus, the 1029-residue chain is Protein STABILIZED1 (1029 aa).

The region spanning 1 to 85 (MVFLSIPNGK…VIIHVLLLGG (85 aa)) is the Ubiquitin-like domain. Gly85 participates in a covalent cross-link: Glycyl lysine isopeptide (Gly-Lys) (interchain with K-? in acceptor proteins). Residues 142 to 170 (AAPGVGRGAGKPSEAEAEDDEEAEEKRYD) are disordered. The stretch at 210–243 (DSRRKDRREAKLKEEIEKYRASNPKITEQFADLK) forms a coiled coil. HAT repeat units lie at residues 367–399 (YDRN…VEEV), 401–431 (GKIK…CRLA), 432–462 (NPED…KLEH), 463–494 (DVEN…LANE), 496–524 (DARI…LETY), 526–554 (ESKK…LEEA), 639–671 (GSIE…LEKS), 673–705 (GSRE…EKWL), 707–739 (GDVP…LEFE), 741–772 (KEPE…VERE), 774–806 (GNVE…LEER), 808–840 (KHLE…LEEK), 842–874 (NGLN…AELR), 876–908 (DNKR…MAPR), and 940–972 (KKVE…FELQ). The TPR 1 repeat unit spans residues 625–658 (KRTWVADADECKKRGSIETARAIYAHALSVFLTK). A TPR 2 repeat occupies 794 to 827 (FKLWLMLGQLEERFKHLEQARKAYDTGLKHCPHC). One copy of the TPR 3 repeat lies at 926-959 (PHVTIAVAKLFWQDKKVEKARAWFERAVTVGPDI).

As to quaternary structure, component of a pre-mRNA splicing complex. Interacts with ZOP1. Interacts with PRP31. As to expression, ubiquitous.

The protein resides in the nucleus. It is found in the cajal body. Functionally, pre-mRNA splicing factor required for splicing and for the turnover of unstable transcripts. May be a U5 snRNP-associated protein involved in the formation of U4/U6-U5 tri-snRNP. Involved in responses to abiotic stresses. Involved in microRNAs (miRNAs) biogenesis by functioning in primary miRNAs (pri-miRNAs) splicing. Required for DNA methylation and transcriptional silencing through the RNA-directed DNA methylation (RdDM) pathway. This Arabidopsis thaliana (Mouse-ear cress) protein is Protein STABILIZED1 (STA1).